Here is an 894-residue protein sequence, read N- to C-terminus: Translation initiation factor IF-2 (894 aa).

The tract at residues Ala47–Lys305 is disordered. A compositionally biased stretch (polar residues) spans Ser68–Val82. 2 stretches are compositionally biased toward basic and acidic residues: residues Val93–Val159 and Asp166–Asp219. The span at Gly254–Asn269 shows a compositional bias: basic residues. The span at Lys270–Ala283 shows a compositional bias: basic and acidic residues. The tr-type G domain maps to Pro393–Lys562. The tract at residues Gly402 to Thr409 is G1. Gly402 to Thr409 provides a ligand contact to GTP. A G2 region spans residues Gly427–His431. The interval Asp448 to Gly451 is G3. GTP-binding positions include Asp448–His452 and Asn502–Asp505. The tract at residues Asn502 to Asp505 is G4. The segment at Ser538–Lys540 is G5.

The protein belongs to the TRAFAC class translation factor GTPase superfamily. Classic translation factor GTPase family. IF-2 subfamily.

Its subcellular location is the cytoplasm. One of the essential components for the initiation of protein synthesis. Protects formylmethionyl-tRNA from spontaneous hydrolysis and promotes its binding to the 30S ribosomal subunits. Also involved in the hydrolysis of GTP during the formation of the 70S ribosomal complex. The sequence is that of Translation initiation factor IF-2 from Citrobacter koseri (strain ATCC BAA-895 / CDC 4225-83 / SGSC4696).